The following is a 135-amino-acid chain: Galectin-1 (135 aa).

Position 2 is an N-acetylalanine (Ala-2). The region spanning 4–135 (GLVASNLNLK…DFKIKCVAFE (132 aa)) is the Galectin domain. N6-acetyllysine occurs at positions 13, 19, and 29. Position 30 is a phosphoserine (Ser-30). Residues 45–49 (HFNPR), His-53, Asn-62, and 69–72 (WGAE) contribute to the a beta-D-galactoside site. The residue at position 128 (Lys-128) is an N6-acetyllysine.

As to quaternary structure, homodimer. Binds LGALS3BP. Interacts with CD2, CD3, CD4, CD6, CD7, CD43, ALCAM and CD45. Interacts with laminin (via poly-N-acetyllactosamine). Interacts with SUSD2. Interacts with cargo receptor TMED10; the interaction mediates the translocation from the cytoplasm into the ERGIC (endoplasmic reticulum-Golgi intermediate compartment) and thereby secretion.

It is found in the secreted. Its subcellular location is the extracellular space. The protein localises to the extracellular matrix. It localises to the cytoplasm. In terms of biological role, lectin that binds beta-galactoside and a wide array of complex carbohydrates. Plays a role in regulating apoptosis, cell proliferation and cell differentiation. Inhibits CD45 protein phosphatase activity and therefore the dephosphorylation of Lyn kinase. Strong inducer of T-cell apoptosis. This chain is Galectin-1 (LGALS1), found in Sus scrofa (Pig).